Reading from the N-terminus, the 148-residue chain is Deoxyuridine 5'-triphosphate nucleotidohydrolase (148 aa).

Substrate is bound by residues Arg-68–Gly-70, Asn-81, Thr-85–Asp-87, and Lys-95.

Belongs to the dUTPase family. Mg(2+) serves as cofactor.

The enzyme catalyses dUTP + H2O = dUMP + diphosphate + H(+). Its pathway is pyrimidine metabolism; dUMP biosynthesis; dUMP from dCTP (dUTP route): step 2/2. Its function is as follows. This enzyme is involved in nucleotide metabolism: it produces dUMP, the immediate precursor of thymidine nucleotides and it decreases the intracellular concentration of dUTP so that uracil cannot be incorporated into DNA. This chain is Deoxyuridine 5'-triphosphate nucleotidohydrolase, found in Rickettsia rickettsii (strain Iowa).